Consider the following 84-residue polypeptide: Small ribosomal subunit protein bS20 (84 aa).

The protein belongs to the bacterial ribosomal protein bS20 family.

Its function is as follows. Binds directly to 16S ribosomal RNA. The sequence is that of Small ribosomal subunit protein bS20 from Latilactobacillus sakei subsp. sakei (strain 23K) (Lactobacillus sakei subsp. sakei).